A 64-amino-acid polypeptide reads, in one-letter code: Large ribosomal subunit protein bL35 (64 aa).

A compositionally biased stretch (basic residues) spans 1–26 (MPKIKTHRGAAKRFKKTGTGKIKRSK). The segment at 1 to 48 (MPKIKTHRGAAKRFKKTGTGKIKRSKAYASHLLGGKSPKRKRNLRKAG) is disordered.

This sequence belongs to the bacterial ribosomal protein bL35 family.

This chain is Large ribosomal subunit protein bL35, found in Syntrophomonas wolfei subsp. wolfei (strain DSM 2245B / Goettingen).